Reading from the N-terminus, the 398-residue chain is Abhydrolase domain-containing protein 2 (398 aa).

Residues 1–4 (MSTA) lie on the Cytoplasmic side of the membrane. The chain crosses the membrane as a helical; Signal-anchor for type II membrane protein span at residues 5–22 (FLTLIAVIVCILFRILNV). At 23–398 (HSQPLKPSVW…MMHEVGKVAP (376 aa)) the chain is on the extracellular side. Residues 113–365 (VAICPGIANS…HGGHLGFYEG (253 aa)) form the AB hydrolase-1 domain. Residues Ser192, Asp328, and His359 each act as charge relay system in the active site.

It belongs to the AB hydrolase superfamily. AB hydrolase 4 family.

It localises to the membrane. This is Abhydrolase domain-containing protein 2 (Hydr2) from Drosophila melanogaster (Fruit fly).